A 462-amino-acid polypeptide reads, in one-letter code: Probable peptidoglycan glycosyltransferase FtsW (462 aa).

At 1–63 the chain is on the cytoplasmic side; sequence MGCIVCSDGI…VRDGRKFDAP (63 aa). The helical transmembrane segment at 64-84 threads the bilayer; that stretch reads LLWMVVLMTAFGLLMIYSASV. The Periplasmic portion of the chain corresponds to 85–97; the sequence is YLASKEGGDQFFY. A helical transmembrane segment spans residues 98–118; sequence LTRQAGFVVAGLIASGFLWFL. The Cytoplasmic portion of the chain corresponds to 119–125; it reads CRMRTWR. The helical transmembrane segment at 126–146 threads the bilayer; that stretch reads RLVPWIFALSGLLLVAVLIAG. Residues 147-160 are Periplasmic-facing; sequence REINGATRWIPLGP. A helical membrane pass occupies residues 161–181; the sequence is LNFQPTELFKLAVILYLASLF. The Cytoplasmic segment spans residues 182–227; sequence TRREEVLRSMESLGWQSIWRGTANLIMSATNPQARRETLEMYGRFR. Helical transmembrane passes span 228-248 and 249-269; these read AIIL…VQPD and FGSF…AGLP. Residues 270–271 are Cytoplasmic-facing; that stretch reads WK. A helical membrane pass occupies residues 272 to 292; it reads YFFVLVGSVLGGMVLMITAAP. The Periplasmic segment spans residues 293-348; sequence YRVQRVVAFLDPWKDPQGAGYQLTHSLMAIGRGEWFGMGLGASLSKRGFLPEAHTD. The chain crosses the membrane as a helical span at residues 349–369; it reads FIFAIIAEEFGFFGMCVLIFC. At 370–386 the chain is on the cytoplasmic side; sequence YGWLVVRAFSIGKQSRD. A helical membrane pass occupies residues 387–409; sequence LGLTFNAYIASGIGIWIGIQSFF. At 410 to 424 the chain is on the periplasmic side; it reads NIGVNIGALPTKGLT. The helical transmembrane segment at 425–445 threads the bilayer; the sequence is LPLMSYGGSSVFFMLISMMLL. At 446–462 the chain is on the cytoplasmic side; the sequence is LRIDYENRRKMRGYRVE.

The protein belongs to the SEDS family. FtsW subfamily.

It is found in the cell inner membrane. It catalyses the reaction [GlcNAc-(1-&gt;4)-Mur2Ac(oyl-L-Ala-gamma-D-Glu-L-Lys-D-Ala-D-Ala)](n)-di-trans,octa-cis-undecaprenyl diphosphate + beta-D-GlcNAc-(1-&gt;4)-Mur2Ac(oyl-L-Ala-gamma-D-Glu-L-Lys-D-Ala-D-Ala)-di-trans,octa-cis-undecaprenyl diphosphate = [GlcNAc-(1-&gt;4)-Mur2Ac(oyl-L-Ala-gamma-D-Glu-L-Lys-D-Ala-D-Ala)](n+1)-di-trans,octa-cis-undecaprenyl diphosphate + di-trans,octa-cis-undecaprenyl diphosphate + H(+). Its pathway is cell wall biogenesis; peptidoglycan biosynthesis. Its function is as follows. Peptidoglycan polymerase that is essential for cell division. The protein is Probable peptidoglycan glycosyltransferase FtsW of Neisseria gonorrhoeae (strain NCCP11945).